A 389-amino-acid polypeptide reads, in one-letter code: Chitinase-3-like protein 1 (389 aa).

Residues 1–29 (MHTSTEARMGMRAALTGFAVLMLLQSCSA) form the signal peptide. Residues 30–389 (YKLVCYFTSW…LTNAIKDALA (360 aa)) form the GH18 domain. A disulfide bridge links cysteine 34 with cysteine 59. N-linked (GlcNAc...) asparagine glycosylation is present at asparagine 68. Chitin contacts are provided by residues 79–80 (EW), 106–109 (GGWK), tyrosine 150, and 213–216 (MTYD). Cysteine 309 and cysteine 372 are joined by a disulfide. The segment at 333-347 (QWVGYEDKESVKNKV) is important for AKT1 activation and IL8 production. Tryptophan 361 lines the chitin pocket.

It belongs to the glycosyl hydrolase 18 family. Monomer. In terms of tissue distribution, detected in lung in pulmonary macrophages and alveolar type 2 cells and in bronchoalveolar lavage (BAL) fluids. Expressed in mammary tumor cells (at protein level). Expressed in lung. Not detected in non-inflammatory colon.

It is found in the secreted. The protein resides in the extracellular space. It localises to the cytoplasm. The protein localises to the endoplasmic reticulum. Carbohydrate-binding lectin with a preference for chitin. Has no chitinase activity. May play a role in tissue remodeling and in the capacity of cells to respond to and cope with changes in their environment. Plays a role in T-helper cell type 2 (Th2) inflammatory response and IL-13-induced inflammation, regulating allergen sensitization, inflammatory cell apoptosis, dendritic cell accumulation and M2 macrophage differentiation. Facilitates invasion of pathogenic enteric bacteria into colonic mucosa and lymphoid organs. Mediates activation of AKT1 signaling pathway and subsequent IL8 production in colonic epithelial cells. Regulates antibacterial responses in lung by contributing to macrophage bacterial killing, controlling bacterial dissemination and augmenting host tolerance. Also regulates hyperoxia-induced injury, inflammation and epithelial apoptosis in lung. The polypeptide is Chitinase-3-like protein 1 (Chi3l1) (Mus musculus (Mouse)).